The chain runs to 282 residues: Bifunctional protein FolD (282 aa).

NADP(+) contacts are provided by residues glycine 166 to serine 168 and isoleucine 232.

This sequence belongs to the tetrahydrofolate dehydrogenase/cyclohydrolase family. As to quaternary structure, homodimer.

The enzyme catalyses (6R)-5,10-methylene-5,6,7,8-tetrahydrofolate + NADP(+) = (6R)-5,10-methenyltetrahydrofolate + NADPH. The catalysed reaction is (6R)-5,10-methenyltetrahydrofolate + H2O = (6R)-10-formyltetrahydrofolate + H(+). Its pathway is one-carbon metabolism; tetrahydrofolate interconversion. Its function is as follows. Catalyzes the oxidation of 5,10-methylenetetrahydrofolate to 5,10-methenyltetrahydrofolate and then the hydrolysis of 5,10-methenyltetrahydrofolate to 10-formyltetrahydrofolate. The protein is Bifunctional protein FolD of Histophilus somni (strain 129Pt) (Haemophilus somnus).